Reading from the N-terminus, the 526-residue chain is Butyrophilin subfamily 1 member A1 (526 aa).

The first 26 residues, 1–26 (MAVFPNSCLAGCLLIFILLQLPKLDS), serve as a signal peptide directing secretion. Ig-like V-type domains follow at residues 27-140 (APFD…VHLK) and 148-234 (PHIS…VEVS). The Extracellular portion of the chain corresponds to 27-242 (APFDVIGPQE…VSIPASFFPR (216 aa)). Intrachain disulfides connect Cys50/Cys124 and Cys164/Cys218. Residue Asn55 is glycosylated (N-linked (GlcNAc...) (complex) asparagine). N-linked (GlcNAc...) (hybrid) asparagine glycosylation is present at Asn215. Residues 243–269 (LTPWMVAVAVILVVLGLLTIGSIFFTW) form a helical membrane-spanning segment. At 270–526 (RLYKERSRQR…IPLQPSQGVP (257 aa)) the chain is on the cytoplasmic side. Residues 285–479 (SKEKLLEELK…LTICPVTDGL (195 aa)) form the B30.2/SPRY domain.

This sequence belongs to the immunoglobulin superfamily. BTN/MOG family. As to quaternary structure, seems to associate with xanthine dehydrogenase/oxidase. In terms of tissue distribution, expressed in mammary tissue.

Its subcellular location is the membrane. May function in the secretion of milk-fat droplets. May act as a specific membrane-associated receptor for the association of cytoplasmic droplets with the apical plasma membrane. Inhibits the proliferation of CD4 and CD8 T-cells activated by anti-CD3 antibodies, T-cell metabolism and IL2 and IFNG secretion. The sequence is that of Butyrophilin subfamily 1 member A1 (BTN1A1) from Bos taurus (Bovine).